The primary structure comprises 630 residues: A-type voltage-gated potassium channel KCND2 (630 aa).

Residues methionine 1 to alanine 184 lie on the Cytoplasmic side of the membrane. Residues alanine 2 to methionine 20 form an interaction with KCNIP1, KCNIP2, and other family members region. Threonine 38 is modified (phosphothreonine). The tract at residues glutamate 71 to aspartate 90 is interaction with KCNIP1. Histidine 105, cysteine 111, cysteine 132, and cysteine 133 together coordinate Zn(2+). Residues leucine 185–threonine 206 form a helical membrane-spanning segment. Residues valine 207–alanine 226 are Extracellular-facing. Residues valine 227–alanine 249 form a helical membrane-spanning segment. Over alanine 250–arginine 256 the chain is Cytoplasmic. A helical membrane pass occupies residues phenylalanine 257–aspartate 281. The Extracellular portion of the chain corresponds to asparagine 282 to glycine 287. The helical; Voltage-sensor transmembrane segment at alanine 288–serine 307 threads the bilayer. Residues glutamine 308 to alanine 321 are Cytoplasmic-facing. An S4-S5 linker region spans residues glutamine 308–alanine 321. Residues serine 322–alanine 345 traverse the membrane as a helical segment. The Extracellular portion of the chain corresponds to glutamate 346–isoleucine 357. An intramembrane region (helical) is located at residues proline 358–threonine 369. The K(+) site is built by threonine 370, leucine 371, glycine 372, and tyrosine 373. Residues threonine 370–aspartate 375 carry the Selectivity filter motif. Residues threonine 370–valine 377 lie within the membrane without spanning it. Residues proline 378–threonine 380 lie on the Extracellular side of the membrane. The chain crosses the membrane as a helical span at residues isoleucine 381–proline 403. At valine 404–leucine 630 the chain is on the cytoplasmic side. Serine 438 bears the Phosphoserine mark. The required for dendritic targeting stretch occupies residues phenylalanine 474–threonine 489. The segment at phenylalanine 474 to leucine 630 is important for normal channel activation and inactivation, for interaction with KCNIP2, and probably other family members as well. A phosphoserine mark is found at serine 548, serine 552, serine 572, and serine 575. Residues isoleucine 600–asparagine 623 are disordered. Residues threonine 602 and threonine 607 each carry the phosphothreonine modification. Serine 616 is subject to Phosphoserine. The PDZ-binding motif lies at valine 627 to leucine 630.

The protein belongs to the potassium channel family. D (Shal) (TC 1.A.1.2) subfamily. Kv4.2/KCND2 sub-subfamily. As to quaternary structure, homotetramer or heterotetramer with KCND1 or KCND3. Associates with the regulatory subunits KCNIP1, KCNIP2, KCNIP3 and KCNIP4. Interacts with DPP6, DPP10, DLG4 and DLG1. In vivo, probably exists as heteromeric complex containing variable proportions of KCND1, KCND2, KCND3, KCNIP1, KCNIP2, KCNIP3, KCNIP4, DPP6 and DPP10. The tetrameric channel can associate with up to four regulatory subunits, such as KCNIP2 or KCNIP4. Interaction with KCNIP3 promotes tetramerization and formation of a functional potassium channel. Interaction with four KCNIP4 chains does not reduce interaction with DPP10. Probably part of a complex consisting of KCNIP1, KCNIP2 isoform 3 and KCND2. Interacts with FLNA and FLNC. Interacts with NCS1/FREQ. Identified in a complex with cAMP-dependent protein kinase (PKA), CAV3, AKAP6 and KCND3 in cardiac myocytes. Interacts (via S1 and S2 helices) with DPP6; this interaction stabilizes the conformation of the S1-S2 helices and facilitates S4 conformational change, including S4 sliding up and down, thereby accelerating activation, inactivation, and recovery. Phosphorylation at Ser-438 in response to MAPK activation is increased in stimulated dendrites. Interaction with KCNIP2 and DPP6 propomtes phosphorylation by PKA at Ser-552. Phosphorylation at Ser-552 has no effect on interaction with KCNIP3, but is required for the regulation of channel activity by KCNIP3. Phosphorylation at Ser-552 leads to KCND2 internalization. Phosphorylated by MAPK in response to signaling via the metabotropic glutamate receptor GRM5. Phosphorylation at Ser-616 is required for the down-regulation of neuronal A-type currents in response to signaling via GRM5. In terms of tissue distribution, detected in brain frontal cortex.

The protein resides in the cell membrane. The protein localises to the cell projection. Its subcellular location is the dendrite. It is found in the synapse. It localises to the perikaryon. The protein resides in the postsynaptic cell membrane. The protein localises to the dendritic spine. Its subcellular location is the sarcolemma. It is found in the cell junction. It localises to the membrane. The protein resides in the caveola. The enzyme catalyses K(+)(in) = K(+)(out). Voltage-gated potassium channel that mediates transmembrane potassium transport in excitable membranes, primarily in the brain. Mediates the major part of the dendritic A-type current I(SA) in brain neurons. This current is activated at membrane potentials that are below the threshold for action potentials. It regulates neuronal excitability, prolongs the latency before the first spike in a series of action potentials, regulates the frequency of repetitive action potential firing, shortens the duration of action potentials and regulates the back-propagation of action potentials from the neuronal cell body to the dendrites. Contributes to the regulation of the circadian rhythm of action potential firing in suprachiasmatic nucleus neurons, which regulates the circadian rhythm of locomotor activity. Functions downstream of the metabotropic glutamate receptor GRM5 and plays a role in neuronal excitability and in nociception mediated by activation of GRM5. Mediates the transient outward current I(to) in rodent heart left ventricle apex cells, but not in human heart, where this current is mediated by another family member. Forms tetrameric potassium-selective channels through which potassium ions pass in accordance with their electrochemical gradient. The channel alternates between opened and closed conformations in response to the voltage difference across the membrane. Can form functional homotetrameric channels and heterotetrameric channels that contain variable proportions of KCND2 and KCND3; channel properties depend on the type of pore-forming alpha subunits that are part of the channel. In vivo, membranes probably contain a mixture of heteromeric potassium channel complexes. Interaction with specific isoforms of the regulatory subunits KCNIP1, KCNIP2, KCNIP3 or KCNIP4 strongly increases expression at the cell surface and thereby increases channel activity; it modulates the kinetics of channel activation and inactivation, shifts the threshold for channel activation to more negative voltage values, shifts the threshold for inactivation to less negative voltages and accelerates recovery after inactivation. Likewise, interaction with DPP6 or DPP10 promotes expression at the cell membrane and regulates both channel characteristics and activity. Upon depolarization, the channel goes from a resting closed state (C state) to an activated but non-conducting state (C* state), from there, the channel may either inactivate (I state) or open (O state). This is A-type voltage-gated potassium channel KCND2 from Oryctolagus cuniculus (Rabbit).